We begin with the raw amino-acid sequence, 118 residues long: Large ribosomal subunit protein bL19 (118 aa).

Belongs to the bacterial ribosomal protein bL19 family.

In terms of biological role, this protein is located at the 30S-50S ribosomal subunit interface and may play a role in the structure and function of the aminoacyl-tRNA binding site. In Campylobacter curvus (strain 525.92), this protein is Large ribosomal subunit protein bL19.